The following is a 3462-amino-acid chain: Extracellular matrix-binding protein EbhA (3462 aa).

Positions 1 to 19 (MVQQSTTVAEAQGNEQKAN) are enriched in polar residues. The disordered stretch occupies residues 1 to 21 (MVQQSTTVAEAQGNEQKANNV). 19 FIVAR domains span residues 24–82 (AMDK…INQA), 150–208 (AMGN…VEQA), 276–334 (AMTQ…ITAA), 402–460 (AMTQ…IQQA), 528–586 (AMTN…VEQA), 654–712 (AMTQ…VAQA), 780–838 (AMGT…VTQA), 906–964 (AMSN…ITRA), 1032–1093 (AMDQ…ITNE), 1158–1216 (AMEL…VNGA), 1284–1342 (AMGN…VEQA), 1410–1467 (AMHG…INQA), 1535–1593 (LMDA…VSSA), 1661–1719 (AMEA…VEQL), 1787–1845 (AMQA…VEQL), 1913–1971 (AMET…VDQV), 2039–2093 (SMDQ…VDQA), 2161–2220 (AMDQ…VIKL), and 2415–2471 (AMET…INGA). Residues 3267 to 3289 (VIKNAIGVVGISGLLASFWFFIA) traverse the membrane as a helical segment. Positions 3365–3462 (RRKEDEEDVE…KKKKAKKNKK (98 aa)) are disordered. 2 stretches are compositionally biased toward basic and acidic residues: residues 3380–3390 (TDEKVLKDNEH) and 3429–3439 (QKDNQSKDKKS). Over residues 3444-3462 (TSKKVAAKKKKKKAKKNKK) the composition is skewed to basic residues.

It localises to the cell membrane. The polypeptide is Extracellular matrix-binding protein EbhA (ebhA) (Staphylococcus aureus (strain Newman)).